An 868-amino-acid chain; its full sequence is Leucine--tRNA ligase (868 aa).

The short motif at 42–52 (PYPSGKLHMGH) is the 'HIGH' region element. Positions 627-631 (KMSKS) match the 'KMSKS' region motif. Residue Lys-630 coordinates ATP.

It belongs to the class-I aminoacyl-tRNA synthetase family.

It is found in the cytoplasm. It catalyses the reaction tRNA(Leu) + L-leucine + ATP = L-leucyl-tRNA(Leu) + AMP + diphosphate. The sequence is that of Leucine--tRNA ligase from Pseudomonas savastanoi pv. phaseolicola (strain 1448A / Race 6) (Pseudomonas syringae pv. phaseolicola (strain 1448A / Race 6)).